We begin with the raw amino-acid sequence, 1044 residues long: Isoleucine--tRNA ligase (1044 aa).

The short motif at 49 to 59 (PYCSGRIHLGT) is the 'HIGH' region element. A 'KMSKS' region motif is present at residues 591-595 (KMSKS). Residue lysine 594 participates in ATP binding.

The protein belongs to the class-I aminoacyl-tRNA synthetase family. IleS type 2 subfamily. In terms of assembly, monomer. Zn(2+) serves as cofactor.

It is found in the cytoplasm. It carries out the reaction tRNA(Ile) + L-isoleucine + ATP = L-isoleucyl-tRNA(Ile) + AMP + diphosphate. Its function is as follows. Catalyzes the attachment of isoleucine to tRNA(Ile). As IleRS can inadvertently accommodate and process structurally similar amino acids such as valine, to avoid such errors it has two additional distinct tRNA(Ile)-dependent editing activities. One activity is designated as 'pretransfer' editing and involves the hydrolysis of activated Val-AMP. The other activity is designated 'posttransfer' editing and involves deacylation of mischarged Val-tRNA(Ile). The chain is Isoleucine--tRNA ligase from Methanothermobacter thermautotrophicus (strain ATCC 29096 / DSM 1053 / JCM 10044 / NBRC 100330 / Delta H) (Methanobacterium thermoautotrophicum).